A 546-amino-acid chain; its full sequence is Chaperonin GroEL (546 aa).

ATP is bound by residues 30–33, Lys-51, 87–91, Gly-415, 479–481, and Asp-495; these read TLGP, DGTTT, and NAA. The disordered stretch occupies residues 527–546; the sequence is DKPAAPPMPGGMGGMGGMDF. Gly residues predominate over residues 536–546; the sequence is GGMGGMGGMDF.

It belongs to the chaperonin (HSP60) family. In terms of assembly, forms a cylinder of 14 subunits composed of two heptameric rings stacked back-to-back. Interacts with the co-chaperonin GroES.

It is found in the cytoplasm. It carries out the reaction ATP + H2O + a folded polypeptide = ADP + phosphate + an unfolded polypeptide.. Functionally, together with its co-chaperonin GroES, plays an essential role in assisting protein folding. The GroEL-GroES system forms a nano-cage that allows encapsulation of the non-native substrate proteins and provides a physical environment optimized to promote and accelerate protein folding. In Bordetella petrii (strain ATCC BAA-461 / DSM 12804 / CCUG 43448), this protein is Chaperonin GroEL.